Consider the following 353-residue polypeptide: Suppressor of RNA-mediated gene silencing (353 aa).

The protein belongs to the phytoreovirus non-structural protein 10 family.

In terms of biological role, suppressor of RNA-mediated gene silencing, also known as post-transcriptional gene silencing (PTGS), a mechanism of plant viral defense that limits the accumulation of viral RNAs. The polypeptide is Suppressor of RNA-mediated gene silencing (Rice dwarf virus (isolate Fujian) (RDV)).